The sequence spans 860 residues: Leucine--tRNA ligase (860 aa).

Positions 42-52 (PYPSGRLHMGH) match the 'HIGH' region motif. The 'KMSKS' region signature appears at 619 to 623 (KMSKS). Residue lysine 622 participates in ATP binding.

The protein belongs to the class-I aminoacyl-tRNA synthetase family.

It localises to the cytoplasm. The enzyme catalyses tRNA(Leu) + L-leucine + ATP = L-leucyl-tRNA(Leu) + AMP + diphosphate. In Escherichia coli O6:K15:H31 (strain 536 / UPEC), this protein is Leucine--tRNA ligase.